Here is a 247-residue protein sequence, read N- to C-terminus: Phosphoribosylaminoimidazole-succinocarboxamide synthase (247 aa).

This sequence belongs to the SAICAR synthetase family.

The enzyme catalyses 5-amino-1-(5-phospho-D-ribosyl)imidazole-4-carboxylate + L-aspartate + ATP = (2S)-2-[5-amino-1-(5-phospho-beta-D-ribosyl)imidazole-4-carboxamido]succinate + ADP + phosphate + 2 H(+). The protein operates within purine metabolism; IMP biosynthesis via de novo pathway; 5-amino-1-(5-phospho-D-ribosyl)imidazole-4-carboxamide from 5-amino-1-(5-phospho-D-ribosyl)imidazole-4-carboxylate: step 1/2. The chain is Phosphoribosylaminoimidazole-succinocarboxamide synthase from Herpetosiphon aurantiacus (strain ATCC 23779 / DSM 785 / 114-95).